Reading from the N-terminus, the 249-residue chain is Sec-independent protein translocase protein TatC (249 aa).

Transmembrane regions (helical) follow at residues 18-38 (VSVGTILVAFLGCFHFWKNIF), 69-89 (AIVISMPIIFWQLWLFIAPGL), 96-116 (VILPFVFFGSGMFLMGAAFSY), 151-171 (LILGFGVAFELPVLAYFLAKV), 187-207 (IVVIFIVAAIITPPDVVSQIF), and 208-228 (MALPLVGLYGLSILIAKMVNP).

It belongs to the TatC family. In terms of assembly, the Tat system comprises two distinct complexes: a TatABC complex, containing multiple copies of TatA, TatB and TatC subunits, and a separate TatA complex, containing only TatA subunits. Substrates initially bind to the TatABC complex, which probably triggers association of the separate TatA complex to form the active translocon.

It localises to the cell inner membrane. Functionally, part of the twin-arginine translocation (Tat) system that transports large folded proteins containing a characteristic twin-arginine motif in their signal peptide across membranes. Together with TatB, TatC is part of a receptor directly interacting with Tat signal peptides. This Helicobacter pylori (strain J99 / ATCC 700824) (Campylobacter pylori J99) protein is Sec-independent protein translocase protein TatC.